Consider the following 156-residue polypeptide: Small ribosomal subunit protein uS7 (156 aa).

Belongs to the universal ribosomal protein uS7 family. As to quaternary structure, part of the 30S ribosomal subunit. Contacts proteins S9 and S11.

One of the primary rRNA binding proteins, it binds directly to 16S rRNA where it nucleates assembly of the head domain of the 30S subunit. Is located at the subunit interface close to the decoding center, probably blocks exit of the E-site tRNA. This Beijerinckia indica subsp. indica (strain ATCC 9039 / DSM 1715 / NCIMB 8712) protein is Small ribosomal subunit protein uS7.